We begin with the raw amino-acid sequence, 71 residues long: Exodeoxyribonuclease 7 small subunit (71 aa).

It belongs to the XseB family. Heterooligomer composed of large and small subunits.

The protein localises to the cytoplasm. It carries out the reaction Exonucleolytic cleavage in either 5'- to 3'- or 3'- to 5'-direction to yield nucleoside 5'-phosphates.. Bidirectionally degrades single-stranded DNA into large acid-insoluble oligonucleotides, which are then degraded further into small acid-soluble oligonucleotides. The sequence is that of Exodeoxyribonuclease 7 small subunit from Streptococcus pyogenes serotype M1.